We begin with the raw amino-acid sequence, 257 residues long: Imidazole glycerol phosphate synthase subunit HisF (257 aa).

Residues Asp11 and Asp130 contribute to the active site.

This sequence belongs to the HisA/HisF family. In terms of assembly, heterodimer of HisH and HisF.

It is found in the cytoplasm. The enzyme catalyses 5-[(5-phospho-1-deoxy-D-ribulos-1-ylimino)methylamino]-1-(5-phospho-beta-D-ribosyl)imidazole-4-carboxamide + L-glutamine = D-erythro-1-(imidazol-4-yl)glycerol 3-phosphate + 5-amino-1-(5-phospho-beta-D-ribosyl)imidazole-4-carboxamide + L-glutamate + H(+). It functions in the pathway amino-acid biosynthesis; L-histidine biosynthesis; L-histidine from 5-phospho-alpha-D-ribose 1-diphosphate: step 5/9. IGPS catalyzes the conversion of PRFAR and glutamine to IGP, AICAR and glutamate. The HisF subunit catalyzes the cyclization activity that produces IGP and AICAR from PRFAR using the ammonia provided by the HisH subunit. In Shewanella baltica (strain OS223), this protein is Imidazole glycerol phosphate synthase subunit HisF.